Here is a 210-residue protein sequence, read N- to C-terminus: Large ribosomal subunit protein uL3 (210 aa).

Belongs to the universal ribosomal protein uL3 family. As to quaternary structure, part of the 50S ribosomal subunit. Forms a cluster with proteins L14 and L19.

Its function is as follows. One of the primary rRNA binding proteins, it binds directly near the 3'-end of the 23S rRNA, where it nucleates assembly of the 50S subunit. The chain is Large ribosomal subunit protein uL3 from Caldicellulosiruptor bescii (strain ATCC BAA-1888 / DSM 6725 / KCTC 15123 / Z-1320) (Anaerocellum thermophilum).